The sequence spans 334 residues: Ornithine carbamoyltransferase (334 aa).

Carbamoyl phosphate is bound by residues 56 to 59, glutamine 83, arginine 107, and 134 to 137; these read STRT and HPTQ. L-ornithine-binding positions include asparagine 168, aspartate 232, and 236-237; that span reads SM. Residues 274 to 275 and arginine 320 contribute to the carbamoyl phosphate site; that span reads CL.

This sequence belongs to the aspartate/ornithine carbamoyltransferase superfamily. OTCase family. Homotrimer.

The protein resides in the cytoplasm. It catalyses the reaction carbamoyl phosphate + L-ornithine = L-citrulline + phosphate + H(+). It participates in amino-acid biosynthesis; L-arginine biosynthesis; L-arginine from L-ornithine and carbamoyl phosphate: step 1/3. In terms of biological role, reversibly catalyzes the transfer of the carbamoyl group from carbamoyl phosphate (CP) to the N(epsilon) atom of ornithine (ORN) to produce L-citrulline. This is Ornithine carbamoyltransferase (argI) from Salmonella typhimurium (strain LT2 / SGSC1412 / ATCC 700720).